The primary structure comprises 1023 residues: Rho GTPase-activating protein 11A (1023 aa).

Positions 49-239 constitute a Rho-GAP domain; that stretch reads VPFNALPHSA…TLIDYASDIG (191 aa). Ser-285 carries the post-translational modification Phosphoserine. Phosphothreonine is present on Thr-306. Residues Ser-316 and Ser-318 each carry the phosphoserine modification. Thr-323 carries the phosphothreonine modification. 3 positions are modified to phosphoserine: Ser-339, Ser-340, and Ser-484. Thr-508 is subject to Phosphothreonine. A disordered region spans residues 567 to 589; the sequence is TPSNLNNKHNSNITSSPLSGDEN. A phosphoserine mark is found at Ser-582, Ser-585, Ser-638, and Ser-675. The interval 714–734 is disordered; that stretch reads KQEFSSDEEIKKQQSPKDKLN. Basic and acidic residues predominate over residues 721-734; the sequence is EEIKKQQSPKDKLN. Residue Ser-847 is modified to Phosphoserine. Thr-866 bears the Phosphothreonine mark. Position 868 is a phosphoserine (Ser-868). The disordered stretch occupies residues 999–1023; that stretch reads AWYKGSPKHPIGKTQLLPTSKPVDL.

It is found in the nucleus. GTPase activator for the Rho-type GTPases by converting them to an inactive GDP-bound state. The chain is Rho GTPase-activating protein 11A from Homo sapiens (Human).